Reading from the N-terminus, the 539-residue chain is Hydroxylamine reductase (539 aa).

Residues C3, C6, C15, and C21 each contribute to the [4Fe-4S] cluster site. 8 residues coordinate hybrid [4Fe-2O-2S] cluster: H235, E259, C303, C394, C422, C447, E482, and K484. Residue C394 is modified to Cysteine persulfide.

The protein belongs to the HCP family. Requires [4Fe-4S] cluster as cofactor. It depends on hybrid [4Fe-2O-2S] cluster as a cofactor.

Its subcellular location is the cytoplasm. It catalyses the reaction A + NH4(+) + H2O = hydroxylamine + AH2 + H(+). In terms of biological role, catalyzes the reduction of hydroxylamine to form NH(3) and H(2)O. The sequence is that of Hydroxylamine reductase from Methanocaldococcus jannaschii (strain ATCC 43067 / DSM 2661 / JAL-1 / JCM 10045 / NBRC 100440) (Methanococcus jannaschii).